The chain runs to 298 residues: 4-hydroxy-tetrahydrodipicolinate synthase (298 aa).

Position 48 (threonine 48) interacts with pyruvate. The Proton donor/acceptor role is filled by tyrosine 137. Residue lysine 166 is the Schiff-base intermediate with substrate of the active site. Isoleucine 207 contacts pyruvate.

It belongs to the DapA family. As to quaternary structure, homotetramer; dimer of dimers.

It localises to the cytoplasm. The enzyme catalyses L-aspartate 4-semialdehyde + pyruvate = (2S,4S)-4-hydroxy-2,3,4,5-tetrahydrodipicolinate + H2O + H(+). The protein operates within amino-acid biosynthesis; L-lysine biosynthesis via DAP pathway; (S)-tetrahydrodipicolinate from L-aspartate: step 3/4. In terms of biological role, catalyzes the condensation of (S)-aspartate-beta-semialdehyde [(S)-ASA] and pyruvate to 4-hydroxy-tetrahydrodipicolinate (HTPA). The protein is 4-hydroxy-tetrahydrodipicolinate synthase of Campylobacter jejuni subsp. jejuni serotype O:23/36 (strain 81-176).